Reading from the N-terminus, the 114-residue chain is UPF0342 protein SSP0954 (114 aa).

The protein belongs to the UPF0342 family.

The polypeptide is UPF0342 protein SSP0954 (Staphylococcus saprophyticus subsp. saprophyticus (strain ATCC 15305 / DSM 20229 / NCIMB 8711 / NCTC 7292 / S-41)).